The following is a 131-amino-acid chain: UPF0212 protein TK1194 (131 aa).

Belongs to the UPF0212 family.

This Thermococcus kodakarensis (strain ATCC BAA-918 / JCM 12380 / KOD1) (Pyrococcus kodakaraensis (strain KOD1)) protein is UPF0212 protein TK1194.